The following is a 165-amino-acid chain: Nucleotide-binding protein PMN2A_1813 (165 aa).

The protein belongs to the YajQ family.

In terms of biological role, nucleotide-binding protein. The sequence is that of Nucleotide-binding protein PMN2A_1813 from Prochlorococcus marinus (strain NATL2A).